Here is a 1258-residue protein sequence, read N- to C-terminus: Serine/threonine-protein kinase Nek1 (1258 aa).

A Protein kinase domain is found at 4–258 (YVRLQKIGEG…VNSILEKGFI (255 aa)). ATP contacts are provided by residues 10-18 (IGEGSFGKA) and lysine 33. Aspartate 128 functions as the Proton acceptor in the catalytic mechanism. Phosphothreonine is present on threonine 156. The residue at position 162 (threonine 162) is a Phosphothreonine; by autocatalysis. A disordered region spans residues 330 to 360 (HEKKPLQKHKQAHQTPEKRVNTGEERRKISE). The span at 344 to 360 (TPEKRVNTGEERRKISE) shows a compositional bias: basic and acidic residues. 4 positions are modified to phosphoserine: serine 414, serine 418, serine 428, and serine 438. Disordered regions lie at residues 578–600 (KLRG…EADM), 648–669 (KSSD…SKQQ), and 685–704 (VDSS…KTNN). The segment covering 579–591 (LRGEKKEANHSEG) has biased composition (basic and acidic residues). Serine 653 bears the Phosphoserine mark. Threonine 661 bears the Phosphothreonine mark. Phosphoserine is present on serine 664. Over residues 691 to 700 (DTRETSEEMQ) the composition is skewed to basic and acidic residues. 6 positions are modified to phosphoserine: serine 798, serine 834, serine 868, serine 881, serine 1052, and serine 1126. A disordered region spans residues 1118 to 1171 (REQPGEEYSEEEESVLKNSDVEPTANGTDVADEDDNPSSESALNEEWHSDNSDG).

Belongs to the protein kinase superfamily. NEK Ser/Thr protein kinase family. NIMA subfamily. Binds to CBY2. Found in a complex with CFAP410, NEK1 and SPATA7. Interacts with CFAP410. Interacts (via Ser-1052 phosphorylated form) with 14-3-3 proteins. It depends on Mg(2+) as a cofactor. In terms of tissue distribution, high fetal expression in the brain and kidney.

The protein localises to the nucleus. It is found in the cytoplasm. Its subcellular location is the cytoskeleton. The protein resides in the microtubule organizing center. It localises to the centrosome. It catalyses the reaction L-seryl-[protein] + ATP = O-phospho-L-seryl-[protein] + ADP + H(+). The catalysed reaction is L-threonyl-[protein] + ATP = O-phospho-L-threonyl-[protein] + ADP + H(+). Phosphorylates serines and threonines, but also appears to possess tyrosine kinase activity. Involved in DNA damage checkpoint control and for proper DNA damage repair. In response to injury that includes DNA damage, NEK1 phosphorylates VDAC1 to limit mitochondrial cell death. May be implicated in the control of meiosis. Involved in cilium assembly. The sequence is that of Serine/threonine-protein kinase Nek1 (NEK1) from Homo sapiens (Human).